The sequence spans 298 residues: MKIPDNPQIQRFPATTPAPTLWKAVADDGVAIVTNAIPIDTIQRFHADIDNTGHATYLEDYKAFKDKEFPVQAKHASNLVRTSPVFRHEILNTPLIHEICTAAFQHLGDYWLTSSIFRSTNPGNPAQDFHRDALFHPLLQYQSPSAPHLTVSLIIPTTPFTKANGATRVILGSHKWENMTPQNIDALSKDDSVHAEMNAGDIMILHQRTIHAGGEHLPEAKDTRRLLLLLFTSCQLAQLESALALPRPLVESLTPLAQKMVGWRTVKPAGVNVVGLNTYHTGTLEDGLGLRSNQTMAG.

3 residues coordinate Fe cation: histidine 130, aspartate 132, and histidine 211.

Belongs to the PhyH family. In terms of assembly, homodimer. It depends on Fe cation as a cofactor.

It participates in secondary metabolite biosynthesis; terpenoid biosynthesis. In terms of biological role, iron/alpha-ketoglutarate-dependent dioxygenase; part of the gene cluster that mediates the biosynthesis of calidodehydroaustin, a fungal meroterpenoid. The first step of the pathway is the synthesis of 3,5-dimethylorsellinic acid by the polyketide synthase ausA. 3,5-dimethylorsellinic acid is then prenylated by the polyprenyl transferase ausN. Further epoxidation by the FAD-dependent monooxygenase ausM and cyclization by the probable terpene cyclase ausL lead to the formation of protoaustinoid A. Protoaustinoid A is then oxidized to spiro-lactone preaustinoid A3 by the combined action of the FAD-binding monooxygenases ausB and ausC, and the dioxygenase ausE. Acid-catalyzed keto-rearrangement and ring contraction of the tetraketide portion of preaustinoid A3 by ausJ lead to the formation of preaustinoid A4. The aldo-keto reductase ausK, with the help of ausH, is involved in the next step by transforming preaustinoid A4 into isoaustinone which is in turn hydroxylated by the P450 monooxygenase ausI to form austinolide. The cytochrome P450 monooxygenase ausG modifies austinolide to austinol. Austinol is further acetylated to austin by the O-acetyltransferase ausP, which spontaneously changes to dehydroaustin. The cytochrome P450 monooxygenase ausR then converts dehydroaustin is into 7-dehydrodehydroaustin. The hydroxylation catalyzed by ausR permits the O-acetyltransferase ausQ to add an additional acetyl group to the molecule, leading to the formation of acetoxydehydroaustin. The short chain dehydrogenase ausT catalyzes the reduction of the double bond present between carbon atoms 1 and 2 to convert 7-dehydrodehydroaustin into 1,2-dihydro-7-hydroxydehydroaustin. AusQ catalyzes not only an acetylation reaction but also the addition of the PKS ausV diketide product to 1,2-dihydro-7-hydroxydehydroaustin, forming precalidodehydroaustin. Finally, the iron/alpha-ketoglutarate-dependent dioxygenase converts precalidodehydroaustin into calidodehydroaustin. The sequence is that of Iron/alpha-ketoglutarate-dependent dioxygenase ausO from Aspergillus calidoustus.